The sequence spans 217 residues: Thiamine-phosphate synthase (217 aa).

4-amino-2-methyl-5-(diphosphooxymethyl)pyrimidine-binding positions include 45 to 49 (QFRQK) and Asn81. 2 residues coordinate Mg(2+): Asp82 and Asp101. Ser120 contributes to the 4-amino-2-methyl-5-(diphosphooxymethyl)pyrimidine binding site. 147–149 (TPS) serves as a coordination point for 2-[(2R,5Z)-2-carboxy-4-methylthiazol-5(2H)-ylidene]ethyl phosphate. Lys150 provides a ligand contact to 4-amino-2-methyl-5-(diphosphooxymethyl)pyrimidine. 2-[(2R,5Z)-2-carboxy-4-methylthiazol-5(2H)-ylidene]ethyl phosphate is bound by residues Gly179 and 197 to 198 (IS).

The protein belongs to the thiamine-phosphate synthase family. It depends on Mg(2+) as a cofactor.

It catalyses the reaction 2-[(2R,5Z)-2-carboxy-4-methylthiazol-5(2H)-ylidene]ethyl phosphate + 4-amino-2-methyl-5-(diphosphooxymethyl)pyrimidine + 2 H(+) = thiamine phosphate + CO2 + diphosphate. It carries out the reaction 2-(2-carboxy-4-methylthiazol-5-yl)ethyl phosphate + 4-amino-2-methyl-5-(diphosphooxymethyl)pyrimidine + 2 H(+) = thiamine phosphate + CO2 + diphosphate. The catalysed reaction is 4-methyl-5-(2-phosphooxyethyl)-thiazole + 4-amino-2-methyl-5-(diphosphooxymethyl)pyrimidine + H(+) = thiamine phosphate + diphosphate. Its pathway is cofactor biosynthesis; thiamine diphosphate biosynthesis; thiamine phosphate from 4-amino-2-methyl-5-diphosphomethylpyrimidine and 4-methyl-5-(2-phosphoethyl)-thiazole: step 1/1. Condenses 4-methyl-5-(beta-hydroxyethyl)thiazole monophosphate (THZ-P) and 2-methyl-4-amino-5-hydroxymethyl pyrimidine pyrophosphate (HMP-PP) to form thiamine monophosphate (TMP). This is Thiamine-phosphate synthase from Helicobacter pylori (strain J99 / ATCC 700824) (Campylobacter pylori J99).